The primary structure comprises 749 residues: Photosystem I P700 chlorophyll a apoprotein A2 (749 aa).

8 consecutive transmembrane segments (helical) span residues 46–69 (LFSTHFGHLAVIGLWVAGNLFHIA), 135–158 (LYQGAIFIDILVAWLLFGGWLHLQ), 175–199 (MNHHLAVLFGFTNIAWTGHLVHVAI), 273–291 (ISHHHIAIGVFMIIGGHMY), 343–366 (LHFQLGLALACLGTAASLVAHHMG), 382–408 (AALYTHHQYIAIFLMCGAFSHGAIFFV), 430–452 (ALISHLSWVCMLLGFHTLALYLH), and 532–550 (FLVHHGIALGLHTTALILI). Positions 574 and 583 each coordinate [4Fe-4S] cluster. Helical transmembrane passes span 590 to 611 (STYMAIFWALNTIAWATYYWHW) and 658 to 680 (LSPWAYMFLAGHLVWATGFMFLI). The divinyl chlorophyll a site is built by H669, M677, and Y685. Phylloquinone is bound at residue W686. Residues 722–742 (LVGVTHFAVGNIFTFGAFVIA) traverse the membrane as a helical segment.

The protein belongs to the PsaA/PsaB family. The PsaA/B heterodimer binds the P700 chlorophyll special pair and subsequent electron acceptors. PSI consists of a core antenna complex that captures photons, and an electron transfer chain that converts photonic excitation into a charge separation. The cyanobacterial PSI reaction center is composed of one copy each of PsaA,B,C,D,E,F,I,J,K,L,M and X, and forms trimeric complexes. The cofactor is PSI electron transfer chain: 5 divinyl chlorophyll a, 1 divinyl chlorophyll a', 2 phylloquinones and 3 4Fe-4S clusters. PSI core antenna: 90 divinyl chlorophyll a, 22 carotenoids, 3 phospholipids and 1 galactolipid. P700 is a divinyl chlorophyll a/divinyl chlorophyll a' dimer, A0 is one or more divinyl chlorophyll a, A1 is one or both phylloquinones and FX is a shared 4Fe-4S iron-sulfur center..

It localises to the cellular thylakoid membrane. The catalysed reaction is reduced [plastocyanin] + hnu + oxidized [2Fe-2S]-[ferredoxin] = oxidized [plastocyanin] + reduced [2Fe-2S]-[ferredoxin]. In terms of biological role, psaA and PsaB bind P700, the primary electron donor of photosystem I (PSI), as well as the electron acceptors A0, A1 and FX. PSI is a plastocyanin/cytochrome c6-ferredoxin oxidoreductase, converting photonic excitation into a charge separation, which transfers an electron from the donor P700 chlorophyll pair to the spectroscopically characterized acceptors A0, A1, FX, FA and FB in turn. Oxidized P700 is reduced on the lumenal side of the thylakoid membrane by plastocyanin or cytochrome c6. The polypeptide is Photosystem I P700 chlorophyll a apoprotein A2 (Prochlorococcus marinus (strain MIT 9313)).